We begin with the raw amino-acid sequence, 159 residues long: SsrA-binding protein (159 aa).

The disordered stretch occupies residues 134 to 159 (KLHDKRETSKERDWNRQKNRLLKERG). Positions 137–159 (DKRETSKERDWNRQKNRLLKERG) are enriched in basic and acidic residues.

The protein belongs to the SmpB family.

It is found in the cytoplasm. In terms of biological role, required for rescue of stalled ribosomes mediated by trans-translation. Binds to transfer-messenger RNA (tmRNA), required for stable association of tmRNA with ribosomes. tmRNA and SmpB together mimic tRNA shape, replacing the anticodon stem-loop with SmpB. tmRNA is encoded by the ssrA gene; the 2 termini fold to resemble tRNA(Ala) and it encodes a 'tag peptide', a short internal open reading frame. During trans-translation Ala-aminoacylated tmRNA acts like a tRNA, entering the A-site of stalled ribosomes, displacing the stalled mRNA. The ribosome then switches to translate the ORF on the tmRNA; the nascent peptide is terminated with the 'tag peptide' encoded by the tmRNA and targeted for degradation. The ribosome is freed to recommence translation, which seems to be the essential function of trans-translation. This chain is SsrA-binding protein, found in Rhizobium meliloti (strain 1021) (Ensifer meliloti).